The sequence spans 345 residues: Methylthioribose-1-phosphate isomerase 2 (345 aa).

Substrate-binding positions include 47-49 (RGA), R88, and Q194. D235 acts as the Proton donor in catalysis. 245–246 (NK) is a binding site for substrate.

It belongs to the eIF-2B alpha/beta/delta subunits family. MtnA subfamily.

It carries out the reaction 5-(methylsulfanyl)-alpha-D-ribose 1-phosphate = 5-(methylsulfanyl)-D-ribulose 1-phosphate. It participates in amino-acid biosynthesis; L-methionine biosynthesis via salvage pathway; L-methionine from S-methyl-5-thio-alpha-D-ribose 1-phosphate: step 1/6. Functionally, catalyzes the interconversion of methylthioribose-1-phosphate (MTR-1-P) into methylthioribulose-1-phosphate (MTRu-1-P). This is Methylthioribose-1-phosphate isomerase 2 from Pseudothermotoga lettingae (strain ATCC BAA-301 / DSM 14385 / NBRC 107922 / TMO) (Thermotoga lettingae).